Consider the following 593-residue polypeptide: Inactive metallocarboxypeptidase ECM14 (593 aa).

Positions 1–22 (MHVTVQLSLLLSLASSLPLVSA) are cleaved as a signal peptide. A propeptide spanning residues 23–175 (IPQHDGQAYT…QAIYESYPKN (153 aa)) is cleaved from the precursor. Disordered stretches follow at residues 75–98 (VPQRGKDSETKTGKQSEAASKAPA) and 172–202 (YPKNNPSSPSHPGATTRRFSPSASTPESQPH). A compositionally biased stretch (basic and acidic residues) spans 78-88 (RGKDSETKTGK). Residues 188 to 199 (RRFSPSASTPES) are compositionally biased toward polar residues. The Peptidase M14 domain occupies 211-537 (DYQPLSVLLP…HAVVAMGKFL (327 aa)). Zn(2+) is bound by residues H276 and E279. Substrate-binding positions include 276-279 (HARE), R334, and 351-352 (DR). A disulfide bond links C345 and C368. The N-linked (GlcNAc...) asparagine glycan is linked to N361. Residue H408 participates in Zn(2+) binding. 409–410 (SY) contributes to the substrate binding site. The interval 548 to 593 (DEPHAGEQTQDNSYDEDGDNLFRAQGGDPQVRFTRRNIGAHDDDSE) is disordered.

The protein belongs to the peptidase M14 family. Zn(2+) serves as cofactor.

It is found in the vacuole. Its subcellular location is the secreted. Functionally, inactive carboxypeptidase that may play a role in cell wall organization and biogenesis. This Arthroderma otae (strain ATCC MYA-4605 / CBS 113480) (Microsporum canis) protein is Inactive metallocarboxypeptidase ECM14 (ECM14).